A 124-amino-acid chain; its full sequence is Fluoride-specific ion channel FluC (124 aa).

Helical transmembrane passes span 1 to 21 (MIGV…LRFA), 34 to 54 (FYAA…YLYG), 62 to 82 (VPLA…TTFS), and 101 to 121 (FSYL…GLIL). Na(+) is bound by residues Gly-76 and Thr-79.

It belongs to the fluoride channel Fluc/FEX (TC 1.A.43) family.

It is found in the cell inner membrane. The enzyme catalyses fluoride(in) = fluoride(out). Na(+) is not transported, but it plays an essential structural role and its presence is essential for fluoride channel function. In terms of biological role, fluoride-specific ion channel. Important for reducing fluoride concentration in the cell, thus reducing its toxicity. The chain is Fluoride-specific ion channel FluC from Azotobacter vinelandii (strain DJ / ATCC BAA-1303).